Here is a 129-residue protein sequence, read N- to C-terminus: Cortical cell-delineating protein (129 aa).

A signal peptide (or 21) is located at residues M1 to A19. The N-linked (GlcNAc...) asparagine glycan is linked to N25. A run of 2 repeats spans residues P29–P34 and P35–P40. The interval P29–P40 is 2 X 6 AA tandem repeats of P-V-V-P-T-P.

The protein to carrot DC2.15 and PEMB3. In terms of tissue distribution, cortical ground meristem of developing roots.

Delineates a novel subset of developing cortical cells. It is probably involved in some aspect of transport of molecules to or from the vasculature. The protein is Cortical cell-delineating protein of Zea mays (Maize).